We begin with the raw amino-acid sequence, 155 residues long: Small ribosomal subunit protein uS7c (155 aa).

The protein belongs to the universal ribosomal protein uS7 family. Part of the 30S ribosomal subunit.

Its subcellular location is the plastid. Functionally, one of the primary rRNA binding proteins, it binds directly to 16S rRNA where it nucleates assembly of the head domain of the 30S subunit. The chain is Small ribosomal subunit protein uS7c (rps7) from Lathraea clandestina (Purple toothwort).